We begin with the raw amino-acid sequence, 270 residues long: Non-structural maintenance of chromosomes element 1 homolog (270 aa).

The segment at 185-226 (CNVCRKVAIQSQLCENCGIPLHLQCAGKYFHGKANPTCPNCN) adopts an RING-type; atypical zinc-finger fold. Residues 236 to 270 (LNQVSSQGPSHSQTETVRGRNQRSKNTSTASRTSR) form a disordered region. Polar residues-rich tracts occupy residues 237–251 (NQVSSQGPSHSQTET) and 259–270 (SKNTSTASRTSR).

This sequence belongs to the NSE1 family. Component of the SMC5-SMC6 complex.

The protein localises to the nucleus. Its subcellular location is the chromosome. It is found in the telomere. The catalysed reaction is S-ubiquitinyl-[E2 ubiquitin-conjugating enzyme]-L-cysteine + [acceptor protein]-L-lysine = [E2 ubiquitin-conjugating enzyme]-L-cysteine + N(6)-ubiquitinyl-[acceptor protein]-L-lysine.. In terms of biological role, RING-type zinc finger-containing E3 ubiquitin ligase that assembles with melanoma antigen protein (MAGE) to catalyze the direct transfer of ubiquitin from E2 ubiquitin-conjugating enzyme to a specific substrate. Within MAGE-RING ubiquitin ligase complex, MAGE stimulates and specifies ubiquitin ligase activity likely through recruitment and/or stabilization of the E2 ubiquitin-conjugating enzyme at the E3:substrate complex. Involved in maintenance of genome integrity, DNA damage response and DNA repair. The protein is Non-structural maintenance of chromosomes element 1 homolog (nsmce1) of Xenopus laevis (African clawed frog).